A 941-amino-acid polypeptide reads, in one-letter code: Isoleucine--tRNA ligase (941 aa).

Positions P58 to H68 match the 'HIGH' region motif. E563 is a binding site for L-isoleucyl-5'-AMP. Residues K604–S608 carry the 'KMSKS' region motif. Position 607 (K607) interacts with ATP. C904, C907, C924, and C927 together coordinate Zn(2+).

Belongs to the class-I aminoacyl-tRNA synthetase family. IleS type 1 subfamily. As to quaternary structure, monomer. The cofactor is Zn(2+).

The protein resides in the cytoplasm. It catalyses the reaction tRNA(Ile) + L-isoleucine + ATP = L-isoleucyl-tRNA(Ile) + AMP + diphosphate. Catalyzes the attachment of isoleucine to tRNA(Ile). As IleRS can inadvertently accommodate and process structurally similar amino acids such as valine, to avoid such errors it has two additional distinct tRNA(Ile)-dependent editing activities. One activity is designated as 'pretransfer' editing and involves the hydrolysis of activated Val-AMP. The other activity is designated 'posttransfer' editing and involves deacylation of mischarged Val-tRNA(Ile). This Halorhodospira halophila (strain DSM 244 / SL1) (Ectothiorhodospira halophila (strain DSM 244 / SL1)) protein is Isoleucine--tRNA ligase.